Reading from the N-terminus, the 339-residue chain is N-acetyl-gamma-glutamyl-phosphate reductase 1 (339 aa).

Cys149 is a catalytic residue.

Belongs to the NAGSA dehydrogenase family. Type 1 subfamily.

It localises to the cytoplasm. The catalysed reaction is N-acetyl-L-glutamate 5-semialdehyde + phosphate + NADP(+) = N-acetyl-L-glutamyl 5-phosphate + NADPH + H(+). It functions in the pathway amino-acid biosynthesis; L-arginine biosynthesis; N(2)-acetyl-L-ornithine from L-glutamate: step 3/4. Its function is as follows. Catalyzes the NADPH-dependent reduction of N-acetyl-5-glutamyl phosphate to yield N-acetyl-L-glutamate 5-semialdehyde. This is N-acetyl-gamma-glutamyl-phosphate reductase 1 from Lactiplantibacillus plantarum (strain ATCC BAA-793 / NCIMB 8826 / WCFS1) (Lactobacillus plantarum).